A 381-amino-acid chain; its full sequence is Tryptophan--tRNA ligase (381 aa).

The 'HIGH' region motif lies at P82–H90. The short motif at K254–S258 is the 'KMSKS' region element.

The protein belongs to the class-I aminoacyl-tRNA synthetase family.

The protein resides in the cytoplasm. It carries out the reaction tRNA(Trp) + L-tryptophan + ATP = L-tryptophyl-tRNA(Trp) + AMP + diphosphate + H(+). This Sulfurisphaera tokodaii (strain DSM 16993 / JCM 10545 / NBRC 100140 / 7) (Sulfolobus tokodaii) protein is Tryptophan--tRNA ligase.